The chain runs to 339 residues: MIEIDGSFGEGGGQILRTSLTLSALTKKPFRIYKIRANRPKPGLQRQHLTAVEAVKKLTNAKVKGDFVGSTELVFEPEDIVEKGDFEFDVGTAGSVTLILQTILPLLINRNIKVTIKGGTDVPKSPSIDYIRLTFLSLLEKIGIRVNLILIRRGHYPEGGGEIKITEVKGNPSSFSLMERGELLMIKGISHVSSLPSHIAERQAKSAKEFLLSKIKIPVEIEIDVRENERSKGSGIALTAIFEKTFLGSDSLGEKGKRAEIVGEEAAKSIYEEIISNATVDRHMSDMLMLYASLYYGEYIGSELTSHARTNSEIIKKFLNVNIQISGEKPFIFRAKKEL.

ATP is bound by residues Q101 and 283-286; that span reads HMSD. Catalysis depends on H307, which acts as the Tele-AMP-histidine intermediate.

It belongs to the RNA 3'-terminal cyclase family. Type 1 subfamily.

Its subcellular location is the cytoplasm. It carries out the reaction a 3'-end 3'-phospho-ribonucleotide-RNA + ATP = a 3'-end 2',3'-cyclophospho-ribonucleotide-RNA + AMP + diphosphate. Functionally, catalyzes the conversion of 3'-phosphate to a 2',3'-cyclic phosphodiester at the end of RNA. The mechanism of action of the enzyme occurs in 3 steps: (A) adenylation of the enzyme by ATP; (B) transfer of adenylate to an RNA-N3'P to produce RNA-N3'PP5'A; (C) and attack of the adjacent 2'-hydroxyl on the 3'-phosphorus in the diester linkage to produce the cyclic end product. The biological role of this enzyme is unknown but it is likely to function in some aspects of cellular RNA processing. This Sulfurisphaera tokodaii (strain DSM 16993 / JCM 10545 / NBRC 100140 / 7) (Sulfolobus tokodaii) protein is RNA 3'-terminal phosphate cyclase.